The primary structure comprises 468 residues: Glutamate--tRNA ligase 2 (468 aa).

The 'HIGH' region motif lies at 9–19; sequence PSPTGFLHIGG. Residues 238–242 carry the 'KMSKS' region motif; the sequence is KLSKR. Lys-241 lines the ATP pocket.

It belongs to the class-I aminoacyl-tRNA synthetase family. Glutamate--tRNA ligase type 1 subfamily. Monomer.

Its subcellular location is the cytoplasm. The catalysed reaction is tRNA(Glu) + L-glutamate + ATP = L-glutamyl-tRNA(Glu) + AMP + diphosphate. Catalyzes the attachment of glutamate to tRNA(Glu) in a two-step reaction: glutamate is first activated by ATP to form Glu-AMP and then transferred to the acceptor end of tRNA(Glu). The protein is Glutamate--tRNA ligase 2 of Rhodospirillum centenum (strain ATCC 51521 / SW).